Here is a 122-residue protein sequence, read N- to C-terminus: uncharacterized protein (122 aa).

It is found in the plastid. This is an uncharacterized protein from Euglena longa (Euglenophycean alga).